A 252-amino-acid polypeptide reads, in one-letter code: MKTVTVKDLVIGTGAPKIIVSLMAKDIARVKSEALAYREADFDILEWRVDHFADLSNVESVMAAAKILRETMPEKPLLFTFRSAKEGGEQAISTEAYIALNRAAIDSGLVDMIDLELFTGDDQVKETVAYAHAHDVKVVMSNHDFHKTPEAEEIIARLRKMQSFDADIPKIALMPQSTSDVLALLAATLEMQEQYADRPIITMSMAKTGVISRLAGEVFGSAATFGAVKKASAPGQISVNDLRTVLTILHQA.

Residues serine 21, 46–48 (EWR), and arginine 82 contribute to the 3-dehydroquinate site. The Proton donor/acceptor role is filled by histidine 143. The active-site Schiff-base intermediate with substrate is lysine 170. Residues arginine 213, serine 232, and glutamine 236 each coordinate 3-dehydroquinate.

The protein belongs to the type-I 3-dehydroquinase family. In terms of assembly, homodimer.

The enzyme catalyses 3-dehydroquinate = 3-dehydroshikimate + H2O. It participates in metabolic intermediate biosynthesis; chorismate biosynthesis; chorismate from D-erythrose 4-phosphate and phosphoenolpyruvate: step 3/7. Involved in the third step of the chorismate pathway, which leads to the biosynthesis of aromatic amino acids. Catalyzes the cis-dehydration of 3-dehydroquinate (DHQ) and introduces the first double bond of the aromatic ring to yield 3-dehydroshikimate. In Escherichia coli O157:H7, this protein is 3-dehydroquinate dehydratase.